A 396-amino-acid polypeptide reads, in one-letter code: Acetyl-CoA acetyltransferase (396 aa).

Residue C88 is the Acyl-thioester intermediate of the active site. Residues H352 and C382 each act as proton acceptor in the active site.

This sequence belongs to the thiolase-like superfamily. Thiolase family. Homotetramer.

It catalyses the reaction 2 acetyl-CoA = acetoacetyl-CoA + CoA. The protein operates within biopolymer metabolism; poly-(R)-3-hydroxybutanoate biosynthesis. When expressed in E.coli with Synechocystis PhaB, PhaC and PhaE confers the ability to synthesize up to 12% (w/w) poly(3-hydroxybutyrate) (PHB) depending on the carbon source. This chain is Acetyl-CoA acetyltransferase, found in Synechocystis sp. (strain ATCC 27184 / PCC 6803 / Kazusa).